A 244-amino-acid chain; its full sequence is Putative ribosomal recycling factor, mitochondrial (244 aa).

This sequence belongs to the RRF family.

It localises to the mitochondrion. Its function is as follows. Necessary for protein synthesis in mitochondria. Functions as a ribosome recycling factor in mitochondria. The polypeptide is Putative ribosomal recycling factor, mitochondrial (rrf1) (Schizosaccharomyces pombe (strain 972 / ATCC 24843) (Fission yeast)).